We begin with the raw amino-acid sequence, 49 residues long: Osteocalcin (49 aa).

One can recognise a Gla domain in the interval 1 to 47 (YLDHWLGAPAPYPDPLEPRREVCELNPDCDELADHIGFQEAYRRFYG). The residue at position 9 (Pro9) is a Hydroxyproline. Glu17, Glu21, Glu24, and Asp30 together coordinate Ca(2+). A 4-carboxyglutamate mark is found at Glu17, Glu21, and Glu24. Cysteines 23 and 29 form a disulfide.

The protein belongs to the osteocalcin/matrix Gla protein family. In terms of processing, gamma-carboxyglutamate residues are formed by vitamin K dependent carboxylation by GGCX. These residues are essential for the binding of calcium. Decarboxylation promotes the hormone activity.

It localises to the secreted. Functionally, the carboxylated form is one of the main organic components of the bone matrix, which constitutes 1-2% of the total bone protein. It acts as a negative regulator of bone formation and is required to limit bone formation without impairing bone resorption or mineralization. The carboxylated form binds strongly to apatite and calcium. Its function is as follows. The uncarboxylated form acts as a hormone secreted by osteoblasts, which regulates different cellular processes, such as energy metabolism, male fertility and brain development. Regulates of energy metabolism by acting as a hormone favoring pancreatic beta-cell proliferation, insulin secretion and sensitivity and energy expenditure. Uncarboxylated osteocalcin hormone also promotes testosterone production in the testes: acts as a ligand for G protein-coupled receptor GPRC6A at the surface of Leydig cells, initiating a signaling response that promotes the expression of enzymes required for testosterone synthesis in a CREB-dependent manner. Also acts as a regulator of brain development: osteocalcin hormone crosses the blood-brain barrier and acts as a ligand for GPR158 on neurons, initiating a signaling response that prevents neuronal apoptosis in the hippocampus, favors the synthesis of all monoamine neurotransmitters and inhibits that of gamma-aminobutyric acid (GABA). Osteocalcin also crosses the placenta during pregnancy and maternal osteocalcin is required for fetal brain development. This Equus caballus (Horse) protein is Osteocalcin (BGLAP).